The chain runs to 869 residues: DNA mismatch repair protein MutS (869 aa).

619–626 (GPNMAGKS) is a binding site for ATP.

This sequence belongs to the DNA mismatch repair MutS family.

Functionally, this protein is involved in the repair of mismatches in DNA. It is possible that it carries out the mismatch recognition step. This protein has a weak ATPase activity. This is DNA mismatch repair protein MutS from Caldanaerobacter subterraneus subsp. tengcongensis (strain DSM 15242 / JCM 11007 / NBRC 100824 / MB4) (Thermoanaerobacter tengcongensis).